The chain runs to 313 residues: Porphobilinogen deaminase (313 aa).

S-(dipyrrolylmethanemethyl)cysteine is present on C242.

Belongs to the HMBS family. As to quaternary structure, monomer. It depends on dipyrromethane as a cofactor.

It carries out the reaction 4 porphobilinogen + H2O = hydroxymethylbilane + 4 NH4(+). The protein operates within porphyrin-containing compound metabolism; protoporphyrin-IX biosynthesis; coproporphyrinogen-III from 5-aminolevulinate: step 2/4. Tetrapolymerization of the monopyrrole PBG into the hydroxymethylbilane pre-uroporphyrinogen in several discrete steps. This Yersinia pestis bv. Antiqua (strain Angola) protein is Porphobilinogen deaminase.